The primary structure comprises 426 residues: Glutamate-1-semialdehyde 2,1-aminomutase (426 aa).

K265 bears the N6-(pyridoxal phosphate)lysine mark.

The protein belongs to the class-III pyridoxal-phosphate-dependent aminotransferase family. HemL subfamily. Homodimer. Requires pyridoxal 5'-phosphate as cofactor.

It is found in the cytoplasm. The enzyme catalyses (S)-4-amino-5-oxopentanoate = 5-aminolevulinate. It participates in porphyrin-containing compound metabolism; protoporphyrin-IX biosynthesis; 5-aminolevulinate from L-glutamyl-tRNA(Glu): step 2/2. In Yersinia pseudotuberculosis serotype O:1b (strain IP 31758), this protein is Glutamate-1-semialdehyde 2,1-aminomutase.